The chain runs to 296 residues: Acetylglutamate kinase (296 aa).

Residues 65 to 66 (GG), Arg87, and Asn190 each bind substrate.

The protein belongs to the acetylglutamate kinase family. ArgB subfamily.

It is found in the cytoplasm. It carries out the reaction N-acetyl-L-glutamate + ATP = N-acetyl-L-glutamyl 5-phosphate + ADP. It functions in the pathway amino-acid biosynthesis; L-arginine biosynthesis; N(2)-acetyl-L-ornithine from L-glutamate: step 2/4. Functionally, catalyzes the ATP-dependent phosphorylation of N-acetyl-L-glutamate. This is Acetylglutamate kinase from Moorella thermoacetica (strain ATCC 39073 / JCM 9320).